The primary structure comprises 133 residues: Ribosome-binding factor A (133 aa).

Belongs to the RbfA family. Monomer. Binds 30S ribosomal subunits, but not 50S ribosomal subunits or 70S ribosomes.

It localises to the cytoplasm. One of several proteins that assist in the late maturation steps of the functional core of the 30S ribosomal subunit. Associates with free 30S ribosomal subunits (but not with 30S subunits that are part of 70S ribosomes or polysomes). Required for efficient processing of 16S rRNA. May interact with the 5'-terminal helix region of 16S rRNA. This is Ribosome-binding factor A from Proteus mirabilis (strain HI4320).